The following is a 170-amino-acid chain: CFA/I fimbrial subunit B (170 aa).

Residues 1-23 (MKFKKTIGAMALTTMFVAVSASA) form the signal peptide.

It belongs to the fimbrial CS1 protein family. As to quaternary structure, CFA/I fimbriae are rather rigid, thread-like filaments of 0.5-1 micrometer, with an apparent axial hole, and a diameter of 7 nanometers. A single CFA/I fimbria consists of about 100 identical protein subunits.

The protein localises to the fimbrium. In terms of biological role, fimbriae (also called pili), polar filaments radiating from the surface of the bacterium to a length of 0.5-1.5 micrometers and numbering 100-300 per cell, enable bacteria to colonize the epithelium of specific host organs. The protein is CFA/I fimbrial subunit B (cfaB) of Escherichia coli O78:H11 (strain H10407 / ETEC).